The sequence spans 37 residues: Serrulin (37 aa).

The segment at 16-37 is disordered; sequence FGGGGIGGGGFGGGYGGGKIKG. The residue at position 36 (lysine 36) is a Lysine amide.

As to expression, expressed in hemocytes (at protein level).

The protein localises to the secreted. Antimicrobial protein with activity against Gram-positive and Gram-negative bacteria, filamentous fungus, and yeast. Was tested against Micrococcus luteus A270 (MIC=0.5-1 uM), Echerichia coli SBS 363 (MIC=9-16 uM), Pseudomonas aeruginosa (MIC=0.01-0.3 uM), Aspergillus niger (MIC=3-6 uM), and Candida albicans MDM8 (MIC=1.5-3 uM). Has no hemolytic activity against human erythrocytes. The chain is Serrulin from Tityus serrulatus (Brazilian scorpion).